Consider the following 183-residue polypeptide: Nucleosome assembly protein 1-like 5 (183 aa).

A disordered region spans residues 1–71 (MADSENQGPA…APKPKNDFIE (71 aa)). Composition is skewed to low complexity over residues 7–21 (QGPA…AAEA) and 28–49 (AEGG…SAAG). The stretch at 81–107 (VLALKKLQKRCDKIEAKFDKEFQALEK) forms a coiled coil. Over residues 135–161 (EGEEEEEEEYEDDEEEGEEEEEEEEAA) the composition is skewed to acidic residues. The interval 135–183 (EGEEEEEEEYEDDEEEGEEEEEEEEAAAEAAAGAKHDDAHAEMPDDAKK) is disordered. Positions 168–183 (AKHDDAHAEMPDDAKK) are enriched in basic and acidic residues.

This sequence belongs to the nucleosome assembly protein (NAP) family.

It is found in the nucleus. The protein is Nucleosome assembly protein 1-like 5 (NAP1L5) of Pongo abelii (Sumatran orangutan).